We begin with the raw amino-acid sequence, 117 residues long: Large ribosomal subunit protein bL20 (117 aa).

This sequence belongs to the bacterial ribosomal protein bL20 family.

In terms of biological role, binds directly to 23S ribosomal RNA and is necessary for the in vitro assembly process of the 50S ribosomal subunit. It is not involved in the protein synthesizing functions of that subunit. The protein is Large ribosomal subunit protein bL20 of Actinobacillus pleuropneumoniae serotype 7 (strain AP76).